We begin with the raw amino-acid sequence, 113 residues long: Nucleoid-associated protein THA_1374 (113 aa).

It belongs to the YbaB/EbfC family. Homodimer.

The protein resides in the cytoplasm. The protein localises to the nucleoid. In terms of biological role, binds to DNA and alters its conformation. May be involved in regulation of gene expression, nucleoid organization and DNA protection. The polypeptide is Nucleoid-associated protein THA_1374 (Thermosipho africanus (strain TCF52B)).